The primary structure comprises 500 residues: L-arabinose isomerase (500 aa).

Mn(2+) contacts are provided by Glu306, Glu333, His350, and His450.

Belongs to the arabinose isomerase family. In terms of assembly, homohexamer. Mn(2+) is required as a cofactor.

The enzyme catalyses beta-L-arabinopyranose = L-ribulose. Its pathway is carbohydrate degradation; L-arabinose degradation via L-ribulose; D-xylulose 5-phosphate from L-arabinose (bacterial route): step 1/3. Catalyzes the conversion of L-arabinose to L-ribulose. This Shigella boydii serotype 18 (strain CDC 3083-94 / BS512) protein is L-arabinose isomerase.